Here is an 87-residue protein sequence, read N- to C-terminus: Phosphoribosyl-ATP pyrophosphatase (87 aa).

This sequence belongs to the PRA-PH family.

Its subcellular location is the cytoplasm. The catalysed reaction is 1-(5-phospho-beta-D-ribosyl)-ATP + H2O = 1-(5-phospho-beta-D-ribosyl)-5'-AMP + diphosphate + H(+). It participates in amino-acid biosynthesis; L-histidine biosynthesis; L-histidine from 5-phospho-alpha-D-ribose 1-diphosphate: step 2/9. The chain is Phosphoribosyl-ATP pyrophosphatase from Kocuria rhizophila (strain ATCC 9341 / DSM 348 / NBRC 103217 / DC2201).